Consider the following 626-residue polypeptide: MLAFAARTVVKPLGLLKPSSLMKVSGRFKAHQDALPRLPVPPLQQSLDHYLKALQPIVSEEEWAHTKQLVDEFQTSGGVGERLQKGLERRAKKMENWLSEWWLKTAYLQFRQPVVIYSSPGVLLPKQDFMDLQGQLRFAAKLIEGVLDFKSMIDNETLPVEFLGGQPLCMNQYYQILSSCRVPGLKQDSVVNFLKSKKPPTHITVVHNYQFFELDVYHSDGTPLTSDQIFVQLEKIWNSSLQSNKEPVGILTSNHRNSWAKAYSSLIKDKVNRESVNSIQKSIFTVCLDKQVPRVSDDVYRSHVAGQMLHGGGSKFNSGNRWFDKTLQFIVAEDGSCGMVYEHAAAEGPPIVALVDHVMEYTKKPELVRSPMVPLPMPKKLRFNITPEIKNDIEKAKQNISIMIQDLDIMMLVFHHFGKDFPKSQKLSPDAFIQIALQLAYYRIYGQACATYESASLRMFHLGRTDTIRSASTDSLAFVKGMDDPKVPEQQRVELLRKAVQAHRAYTDRAIRGEAFDRHLLGLKLQAIEDLVSMPDIFMDTSYAIAMHFNLSTSQVPAKTDCVMSFGPVVPDGYGICYNPMEAHINFSVSAYNSCAETNAARMAHYLEKALLDMRTLLQNHPRAKL.

K93 carries the post-translational modification N6-succinyllysine. At K261 the chain carries N6-acetyllysine; alternate. K261 carries the N6-succinyllysine; alternate modification. N6-acetyllysine is present on K268. Catalysis depends on H343, which acts as the Proton acceptor. CoA-binding positions include K419 and 423–430 (KSQKLSPD). 2 residues coordinate (R)-carnitine: Y452 and S454. Residue S456 participates in CoA binding. T465 provides a ligand contact to (R)-carnitine. 2 residues coordinate CoA: R504 and Q555. The Microbody targeting signal motif lies at 624 to 626 (AKL).

The protein belongs to the carnitine/choline acetyltransferase family. Monomer. As to expression, expressed in flagella of epididymal sperm.

It is found in the endoplasmic reticulum. Its subcellular location is the peroxisome. The protein localises to the mitochondrion inner membrane. It catalyses the reaction (R)-carnitine + acetyl-CoA = O-acetyl-(R)-carnitine + CoA. The enzyme catalyses propanoyl-CoA + (R)-carnitine = O-propanoyl-(R)-carnitine + CoA. It carries out the reaction butanoyl-CoA + (R)-carnitine = O-butanoyl-(R)-carnitine + CoA. The catalysed reaction is hexanoyl-CoA + (R)-carnitine = O-hexanoyl-(R)-carnitine + CoA. It catalyses the reaction octanoyl-CoA + (R)-carnitine = O-octanoyl-(R)-carnitine + CoA. The enzyme catalyses decanoyl-CoA + (R)-carnitine = O-decanoyl-(R)-carnitine + CoA. It carries out the reaction 3-methylbutanoyl-CoA + (R)-carnitine = O-3-methylbutanoyl-(R)-carnitine + CoA. The catalysed reaction is 2-methylpropanoyl-CoA + (R)-carnitine = O-isobutanoyl-(R)-carnitine + CoA. It catalyses the reaction 2-methylbutanoyl-CoA + (R)-carnitine = O-2-methylbutanoyl-(R)-carnitine + CoA. The enzyme catalyses acetoacetyl-CoA + (R)-carnitine = O-3-oxobutanoyl-(R)-carnitine + CoA. It carries out the reaction 3-hydroxybutanoyl-CoA + (R)-carnitine = O-3-hydroxybutanoyl-(R)-carnitine + CoA. The catalysed reaction is 4,8-dimethylnonanoyl-CoA + (R)-carnitine = O-4,8-dimethylnonanoyl-(R)-carnitine + CoA. It catalyses the reaction 2,6-dimethylheptanoyl-CoA + (R)-carnitine = O-2,6-dimethylheptanoyl-(R)-carnitine + CoA. Catalyzes the reversible transfer of acyl groups from carnitine to coenzyme A (CoA) and regulates the acyl-CoA/CoA ratio. Also plays a crucial role in the transport of fatty acids for beta-oxidation. Responsible for the synthesis of short- and branched-chain acylcarnitines. Active towards some branched-chain amino acid oxidation pathway (BCAAO) intermediates. Trans-2-enoyl-CoAs and 2-methylacyl-CoAs are poor substrates. The protein is Carnitine O-acetyltransferase of Rattus norvegicus (Rat).